A 78-amino-acid chain; its full sequence is UPF0335 protein A1E_00570 (78 aa).

The protein belongs to the UPF0335 family.

The polypeptide is UPF0335 protein A1E_00570 (Rickettsia canadensis (strain McKiel)).